Here is a 124-residue protein sequence, read N- to C-terminus: Large ribosomal subunit protein bL19 (124 aa).

It belongs to the bacterial ribosomal protein bL19 family.

In terms of biological role, this protein is located at the 30S-50S ribosomal subunit interface and may play a role in the structure and function of the aminoacyl-tRNA binding site. This is Large ribosomal subunit protein bL19 from Orientia tsutsugamushi (strain Ikeda) (Rickettsia tsutsugamushi).